Here is a 387-residue protein sequence, read N- to C-terminus: [LysW]-aminoadipate semialdehyde/glutamate semialdehyde transaminase (387 aa).

Pyridoxal 5'-phosphate is bound by residues 96-97 (GT) and Phe-123. Arg-126 contacts substrate. 207–210 (DEIQ) serves as a coordination point for pyridoxal 5'-phosphate. Lys-236 carries the post-translational modification N6-(pyridoxal phosphate)lysine. Position 264 (Ser-264) interacts with substrate. Thr-265 contacts pyridoxal 5'-phosphate.

It belongs to the class-III pyridoxal-phosphate-dependent aminotransferase family. LysJ subfamily. Homodimer. Requires pyridoxal 5'-phosphate as cofactor.

It is found in the cytoplasm. The catalysed reaction is [amino-group carrier protein]-C-terminal-gamma-(L-lysyl)-L-glutamate + 2-oxoglutarate = [amino-group carrier protein]-C-terminal-N-(1-carboxy-5-oxopentan-1-yl)-L-glutamine + L-glutamate. It carries out the reaction [amino-group carrier protein]-C-terminal-gamma-(L-ornithyl)-L-glutamate + 2-oxoglutarate = [amino-group carrier protein]-C-terminal-gamma-(L-glutamyl-5-semialdehyde)-L-glutamate + L-glutamate. Its pathway is amino-acid biosynthesis; L-lysine biosynthesis via AAA pathway; L-lysine from L-alpha-aminoadipate (Thermus route): step 4/5. The protein operates within amino-acid biosynthesis; L-arginine biosynthesis. Its function is as follows. Involved in both the arginine and lysine biosynthetic pathways. The protein is [LysW]-aminoadipate semialdehyde/glutamate semialdehyde transaminase of Sulfolobus acidocaldarius (strain ATCC 33909 / DSM 639 / JCM 8929 / NBRC 15157 / NCIMB 11770).